Reading from the N-terminus, the 140-residue chain is Ribosome-binding factor A (140 aa).

Residues 121–140 (KAAEHGREDEELDDTEQDDK) form a disordered region. The span at 129–140 (DEELDDTEQDDK) shows a compositional bias: acidic residues.

The protein belongs to the RbfA family. Monomer. Binds 30S ribosomal subunits, but not 50S ribosomal subunits or 70S ribosomes.

The protein localises to the cytoplasm. One of several proteins that assist in the late maturation steps of the functional core of the 30S ribosomal subunit. Associates with free 30S ribosomal subunits (but not with 30S subunits that are part of 70S ribosomes or polysomes). Required for efficient processing of 16S rRNA. May interact with the 5'-terminal helix region of 16S rRNA. This chain is Ribosome-binding factor A, found in Shewanella loihica (strain ATCC BAA-1088 / PV-4).